The sequence spans 215 residues: Adenylate kinase (215 aa).

Position 10-15 (10-15) interacts with ATP; that stretch reads GAGKGT. The segment at 30–59 is NMP; that stretch reads STGDMFRKAIKEETELGKEAKSYMDRGELV. AMP-binding positions include threonine 31, arginine 36, 57-59, 85-88, and glutamine 92; these read ELV and GFPR. An LID region spans residues 126-163; sequence GRRICESCGTTYHLVFNPPKVEGICDIDGGKLYQREDD. Arginine 127 contacts ATP. Zn(2+) contacts are provided by cysteine 130 and cysteine 133. 136–137 is an ATP binding site; it reads TY. Zn(2+)-binding residues include cysteine 150 and aspartate 153. AMP contacts are provided by arginine 160 and arginine 171. Position 199 (lysine 199) interacts with ATP.

The protein belongs to the adenylate kinase family. As to quaternary structure, monomer.

It is found in the cytoplasm. The enzyme catalyses AMP + ATP = 2 ADP. It participates in purine metabolism; AMP biosynthesis via salvage pathway; AMP from ADP: step 1/1. Catalyzes the reversible transfer of the terminal phosphate group between ATP and AMP. Plays an important role in cellular energy homeostasis and in adenine nucleotide metabolism. The sequence is that of Adenylate kinase from Staphylococcus aureus (strain COL).